Reading from the N-terminus, the 82-residue chain is Splicing factor U2AF 35 kDa subunit (82 aa).

Residue alanine 2 is modified to N-acetylalanine. The segment at 12–40 adopts a C3H1-type zinc-finger fold; that stretch reads EKDKVNCSFYFKIGACRHGDRCSRLHNKP. An N6-methyllysine modification is found at lysine 39. The RRM domain occupies 65 to 82; it reads SHCHVSDVEVQEHYDNFF.

Belongs to the splicing factor SR family. In terms of assembly, identified in the spliceosome C complex. Heterodimer with U2AF2. Interacts (via RS domain) with PHF5A (via N-terminus). Interacts with ZRANB2. Interacts with SDE2. Interacts with SF3B1.

It localises to the nucleus. Its subcellular location is the nucleus speckle. Plays a critical role in both constitutive and enhancer-dependent splicing by mediating protein-protein interactions and protein-RNA interactions required for accurate 3'-splice site selection. Recruits U2 snRNP to the branch point. Directly mediates interactions between U2AF2 and proteins bound to the enhancers and thus may function as a bridge between U2AF2 and the enhancer complex to recruit it to the adjacent intron. This is Splicing factor U2AF 35 kDa subunit (U2AF1) from Sus scrofa (Pig).